The chain runs to 180 residues: MKLDNETIVHRYGKALFELAEEMKIRNKFHSELQEYKKVLQNEPQLKVFMSSNQISPEAKLKIMEILKKDSSKLMTNLLDMLYDYGRITSLEGIIDEFDRLNDEFEKTVRASVITAIELDEERKQKLASSFANVVGAKKVIIDPIVDPGIIGGVILKSESYIYDGSIKTKIARIKRLLLK.

Belongs to the ATPase delta chain family. In terms of assembly, F-type ATPases have 2 components, F(1) - the catalytic core - and F(0) - the membrane proton channel. F(1) has five subunits: alpha(3), beta(3), gamma(1), delta(1), epsilon(1). F(0) has three main subunits: a(1), b(2) and c(10-14). The alpha and beta chains form an alternating ring which encloses part of the gamma chain. F(1) is attached to F(0) by a central stalk formed by the gamma and epsilon chains, while a peripheral stalk is formed by the delta and b chains.

The protein resides in the cell membrane. In terms of biological role, f(1)F(0) ATP synthase produces ATP from ADP in the presence of a proton or sodium gradient. F-type ATPases consist of two structural domains, F(1) containing the extramembraneous catalytic core and F(0) containing the membrane proton channel, linked together by a central stalk and a peripheral stalk. During catalysis, ATP synthesis in the catalytic domain of F(1) is coupled via a rotary mechanism of the central stalk subunits to proton translocation. Functionally, this protein is part of the stalk that links CF(0) to CF(1). It either transmits conformational changes from CF(0) to CF(1) or is implicated in proton conduction. In Ligilactobacillus salivarius (strain UCC118) (Lactobacillus salivarius), this protein is ATP synthase subunit delta.